A 126-amino-acid polypeptide reads, in one-letter code: Histone H2B (126 aa).

Low complexity predominate over residues 1-12 (MPEPAKSAPAAK). Residues 1–35 (MPEPAKSAPAAKKGSKKAVSKVQKKDGKKRRKSRK) form a disordered region. 2 positions are modified to N6-acetyllysine: lysine 6 and lysine 13. Serine 15 carries the phosphoserine modification. 2 positions are modified to N6-acetyllysine: lysine 16 and lysine 21. Serine 113 is a glycosylation site (O-linked (GlcNAc) serine). Residue lysine 121 forms a Glycyl lysine isopeptide (Lys-Gly) (interchain with G-Cter in ubiquitin) linkage.

The protein belongs to the histone H2B family. The nucleosome is a histone octamer containing two molecules each of H2A, H2B, H3 and H4 assembled in one H3-H4 heterotetramer and two H2A-H2B heterodimers. The octamer wraps approximately 147 bp of DNA. Monoubiquitination of Lys-121 by BRE1 gives a specific tag for epigenetic transcriptional activation and is also prerequisite for histone H3 'Lys-4' and 'Lys-79' methylation. In terms of processing, phosphorylated on Ser-15 during apoptosis; which facilitates apoptotic chromatin condensation. Post-translationally, glcNAcylation at Ser-113 promotes monoubiquitination of Lys-121. It fluctuates in response to extracellular glucose, and associates with transcribed genes. In terms of tissue distribution, expressed by the skin granular glands.

The protein resides in the nucleus. It localises to the secreted. It is found in the chromosome. Functionally, core component of nucleosome. Nucleosomes wrap and compact DNA into chromatin, limiting DNA accessibility to the cellular machineries which require DNA as a template. Histones thereby play a central role in transcription regulation, DNA repair, DNA replication and chromosomal stability. DNA accessibility is regulated via a complex set of post-translational modifications of histones, also called histone code, and nucleosome remodeling. Its function is as follows. Has antibacterial activity against the Gram-negative bacteria E.coli and the Gram-positive bacteria S.aureus. This Zhangixalus schlegelii (Japanese gliding frog) protein is Histone H2B.